The primary structure comprises 255 residues: Hydroxyacylglutathione hydrolase (255 aa).

Zn(2+) is bound by residues H56, H58, D60, H61, H114, D133, and H171.

It belongs to the metallo-beta-lactamase superfamily. Glyoxalase II family. Monomer. It depends on Zn(2+) as a cofactor.

The catalysed reaction is an S-(2-hydroxyacyl)glutathione + H2O = a 2-hydroxy carboxylate + glutathione + H(+). Its pathway is secondary metabolite metabolism; methylglyoxal degradation; (R)-lactate from methylglyoxal: step 2/2. Its function is as follows. Thiolesterase that catalyzes the hydrolysis of S-D-lactoyl-glutathione to form glutathione and D-lactic acid. This chain is Hydroxyacylglutathione hydrolase, found in Rhodopseudomonas palustris (strain ATCC BAA-98 / CGA009).